The primary structure comprises 323 residues: Sphingolipid delta(4)-desaturase/C4-monooxygenase DES2 (323 aa).

The N-myristoyl glycine moiety is linked to residue glycine 2. Transmembrane regions (helical) follow at residues 41–61 (PHIK…CWLV) and 68–88 (WLLF…TLAI). The short motif at 89-93 (HDISH) is the Histidine box-1 element. The tract at residues 95–99 (TAFGT) is required for C4-hydroxylase activity. A Histidine box-2 motif is present at residues 128-132 (HVDHH). Residues 210-231 (VYLLGSSLLGLGLHPISGHFVA) form a helical membrane-spanning segment. The short motif at 259 to 263 (HMEHH) is the Histidine box-3 element.

Belongs to the fatty acid desaturase type 1 family. DEGS subfamily. In terms of tissue distribution, highly expressed in intestinal crypt cells and adjacent epithelial cells (at protein level).

The protein resides in the endoplasmic reticulum membrane. It carries out the reaction a dihydroceramide + 2 Fe(II)-[cytochrome b5] + O2 + 2 H(+) = a phytoceramide + 2 Fe(III)-[cytochrome b5] + H2O. The enzyme catalyses an N-acylsphinganine + 2 Fe(II)-[cytochrome b5] + O2 + 2 H(+) = an N-acylsphing-4-enine + 2 Fe(III)-[cytochrome b5] + 2 H2O. The catalysed reaction is an N-acylsphinganine + 2 Fe(II)-[cytochrome b5] + O2 + 2 H(+) = an N-acyl-(4R)-4-hydroxysphinganine + 2 Fe(III)-[cytochrome b5] + H2O. It catalyses the reaction N-octanoylsphinganine + 2 Fe(II)-[cytochrome b5] + O2 + 2 H(+) = N-octanoyl-4-hydroxysphinganine + 2 Fe(III)-[cytochrome b5] + H2O. It participates in membrane lipid metabolism; sphingolipid biosynthesis. Bifunctional enzyme which acts both as a sphingolipid delta(4)-desaturase and a sphingolipid C4-monooxygenase. This Mus musculus (Mouse) protein is Sphingolipid delta(4)-desaturase/C4-monooxygenase DES2.